Here is a 61-residue protein sequence, read N- to C-terminus: Large ribosomal subunit protein bL28 (61 aa).

The segment at 1–26 (MAKDFLNGKRTHFGNKRSHALNSSRR) is disordered. Residues 9 to 19 (KRTHFGNKRSH) are compositionally biased toward basic residues.

Belongs to the bacterial ribosomal protein bL28 family.

The sequence is that of Large ribosomal subunit protein bL28 from Levilactobacillus brevis (strain ATCC 367 / BCRC 12310 / CIP 105137 / JCM 1170 / LMG 11437 / NCIMB 947 / NCTC 947) (Lactobacillus brevis).